Here is a 227-residue protein sequence, read N- to C-terminus: Ribonuclease 3 (227 aa).

An RNase III domain is found at 5–127; it reads YQKLSRRIGY…IIGAMYLDAG (123 aa). A Mg(2+)-binding site is contributed by E40. Residue D44 is part of the active site. Residues D113 and E116 each coordinate Mg(2+). Residue E116 is part of the active site. In terms of domain architecture, DRBM spans 154–224; sequence DAKTRLQEFL…AAKALKKLEK (71 aa).

Belongs to the ribonuclease III family. In terms of assembly, homodimer. It depends on Mg(2+) as a cofactor.

It is found in the cytoplasm. The enzyme catalyses Endonucleolytic cleavage to 5'-phosphomonoester.. Its function is as follows. Digests double-stranded RNA. Involved in the processing of primary rRNA transcript to yield the immediate precursors to the large and small rRNAs (23S and 16S). Processes some mRNAs, and tRNAs when they are encoded in the rRNA operon. Processes pre-crRNA and tracrRNA of type II CRISPR loci if present in the organism. The chain is Ribonuclease 3 from Marinomonas sp. (strain MWYL1).